Here is a 390-residue protein sequence, read N- to C-terminus: Guanidine hydrolase (390 aa).

Histidine 174, aspartate 199, histidine 201, aspartate 203, aspartate 291, and aspartate 293 together coordinate Ni(2+).

This sequence belongs to the arginase family. In terms of assembly, homohexamer. It depends on Ni(2+) as a cofactor.

The protein resides in the cytoplasm. It carries out the reaction guanidine + H2O = urea + NH4(+). Its activity is regulated as follows. Activation of GdmH depends on the presence of the accessory proteins GhaA (Sll1078) and GhaB (Sll1079), which load nickel into the active site. Hydrolase activity is slightly activated in the presence of GTP. It does not require ATP or NAD(P)H. Addition of Ca(2+), Mn(2+), Fe(2+) or Fe(3+) has no consistent effects, whereas addition of Co(2+), Cu(2+) or Zn(2+) inhibits the activity. In terms of biological role, catalyzes the hydrolysis of guanidine into urea and ammonium. Is highly specific for free guanidine. At pH 8, also catalyzes the release of urea from methylguanidine but with significantly reduced specific activity compared with that for guanidine. Cannot hydrolyze guanidinoacetate, guanidinopropionate, guanidinobutyrate, agmatine, arginine or creatine. Required to use guanidine as the sole nitrogen source for growth. Overexpression of the gene accelerates guanidine degradation and promotes biomass growth. The polypeptide is Guanidine hydrolase (Synechocystis sp. (strain ATCC 27184 / PCC 6803 / Kazusa)).